Reading from the N-terminus, the 414-residue chain is MFPCSRIWSLLVAAATASAVPTSLATTHLQSVDLLLTRSSYGFLTDIALGTPGQSLPYLVDWTWTGHYVVTTLCYNDPTATYDCLNVDQKIFNQTLSSTFINQTDQYGYLYWDPNHFYFTEPAAADVATDMLRIGPTAVNTTIQAANFVFNETISAFPFSGVYGLSPVFQGDNRSVQASFYQGWRSGAWHSPIVSFIYCHDNATKAVCSGYDGLQTLGGYNTSHVQGDITWYDIIVTEAINTLDFVYAPAVINYWALNLTRFSIGDEEQELNKTTTLDGKQAAVAAFDHASYGRGAPVSVYGYQRLVELVGAKAVTLSDPPNNGEQGFYQFDCRNSSLLPPLRYEFAGSERAWEIVPENYVEVLANGTNKCTFNVRTLGDGAMVMGNFGETFAIDKYVMFDFEKLQVGIADFAW.

The N-terminal stretch at Met-1–Ala-19 is a signal peptide. The 368-residue stretch at Phe-43–Ala-410 folds into the Peptidase A1 domain. N-linked (GlcNAc...) asparagine glycosylation is found at Asn-93, Asn-102, Asn-140, Asn-151, Asn-173, Asn-202, Asn-221, Asn-258, Asn-272, Asn-335, and Asn-366. A disulfide bridge connects residues Cys-333 and Cys-371.

The protein belongs to the peptidase A1 family.

It functions in the pathway secondary metabolite biosynthesis. Aspartic protease-like protein; part of the gene cluster that mediates the biosynthesis of pyranonigrins, a family of antioxidative compounds. The first step of pyranonigrins biosynthesis is performed by the hybrid PKS-NRPS synthetase that condenses 6 malonyl-CoA units to an acetyl starter unit, to form a 1,3,5-trioxotetradecane-6,8-dienyl-ACP. The enoyl reductase (ER) domain of pynA is likely to be functional during the first two rounds of polyketide chain extension, to generate the saturated C-C bonds of the alkyl side chain. PynA subsequently forms the amide bond between the acyl chain and L-serine. Although pynA has a terminal reductase domain, it appears to require the thioesterase pynI for the release of the straight-chain intermediate from pynA via the formation of a tetramic acid pyranonigrin J. The methyltransferase pynC then coverts pyranonigrin J to pyranonigrin I via N-methylation. The FAD-dependent monooxygenase pynG catalyzes an epoxidation-mediated cyclization to form the dihydro-gamma-pyrone moiety, followed by pynD-catalyzed oxidation of the alcohol to the ketone and enolization to yield the characteristic tetramic acid-fused gamma-pyrone core of pyranonigrin H. Pyranonigrin H is substrate of pynH for dehydration-mediated exo-methylene formation from the serine side chain to produce pyranonigrin E, before the oxidase pynE reduces the exo-methylene of pyranonigrin E into a pendant methyl to form pyranonigrin G. The FAD-linked oxidoreductase pynB performs the reverse reaction and converts pyranonigrin G back to pyranonigrin E. The polypeptide is Aspartic protease-like protein pynH (Aspergillus niger (strain ATCC MYA-4892 / CBS 513.88 / FGSC A1513)).